A 691-amino-acid chain; its full sequence is DNA ligase (691 aa).

Residues 1–22 (MTTAEDVAGNPYISDPRTDFES) form a disordered region. Residues 59 to 63 (DRAYD), 107 to 108 (SI), and E137 contribute to the NAD(+) site. K139 serves as the catalytic N6-AMP-lysine intermediate. The NAD(+) site is built by R160, E196, K311, and K335. Zn(2+) is bound by residues C426, C429, C442, and C448. In terms of domain architecture, BRCT spans 608 to 691 (TDGDALDGQT…EELLDDAGVL (84 aa)). The interval 637–667 (ERNDGSATSSVSGNTDYLVLGDNPGQRKQDD) is disordered. Over residues 641–651 (GSATSSVSGNT) the composition is skewed to polar residues.

It belongs to the NAD-dependent DNA ligase family. LigA subfamily. The cofactor is Mg(2+). Mn(2+) is required as a cofactor.

The enzyme catalyses NAD(+) + (deoxyribonucleotide)n-3'-hydroxyl + 5'-phospho-(deoxyribonucleotide)m = (deoxyribonucleotide)n+m + AMP + beta-nicotinamide D-nucleotide.. Its function is as follows. DNA ligase that catalyzes the formation of phosphodiester linkages between 5'-phosphoryl and 3'-hydroxyl groups in double-stranded DNA using NAD as a coenzyme and as the energy source for the reaction. It is essential for DNA replication and repair of damaged DNA. The protein is DNA ligase of Haloarcula marismortui (strain ATCC 43049 / DSM 3752 / JCM 8966 / VKM B-1809) (Halobacterium marismortui).